A 487-amino-acid polypeptide reads, in one-letter code: Selenium-binding protein 2 (487 aa).

At alanine 2 the chain carries N-acetylalanine. Residues cysteine 19 and cysteine 20 each coordinate selenite.

The protein belongs to the selenium-binding protein family. Mostly expressed in seedlings, leaves and stems, and, to a lower extent, in flowers and roots.

Its function is as follows. Required for the fusion of female gametophyte polar nuclei. This Arabidopsis thaliana (Mouse-ear cress) protein is Selenium-binding protein 2 (SBP2).